The primary structure comprises 373 residues: MEISYYEILEITQNADKETIKKAYRKMALKYHPDRNQGDKEAEDKFKLVNEAYEVLSNDEKRAIYDRYGKDALKGGGFGSSSSGFGGFEDLGDIFSSFFGEGFGSSRRRKSSNDEKIPSDFIVNLKLSFKEAVFGCKKNIDFTYKCSCKTCNGTGAKDGKLQTCPKCQGRGQVGVSQGFITFAQTCPDCQGIGEKASEKCSDCKGLGYNESKNSVELNIPEGVDTGMKLRVNAKGNILKNGTRGDMYVKIIAAEDDTFIRDDDDIYIEFPVFFTQAILGESIKVPTIRGEATLNLPKGAKDGQRFVLEKEGVKDVHSSRIGNQIVQISIKFPTSLNDEQKELLEKLSESFGIKDGMHQEQKGLFEKIANWFKS.

Residues 4 to 69 (SYYEILEITQ…EKRAIYDRYG (66 aa)) enclose the J domain. The CR-type zinc finger occupies 135-212 (GCKKNIDFTY…CKGLGYNESK (78 aa)). The Zn(2+) site is built by C148, C151, C164, C167, C186, C189, C200, and C203. 4 CXXCXGXG motif repeats span residues 148 to 155 (CKTCNGTG), 164 to 171 (CPKCQGRG), 186 to 193 (CPDCQGIG), and 200 to 207 (CSDCKGLG).

The protein belongs to the DnaJ family. Homodimer. The cofactor is Zn(2+).

The protein resides in the cytoplasm. Participates actively in the response to hyperosmotic and heat shock by preventing the aggregation of stress-denatured proteins and by disaggregating proteins, also in an autonomous, DnaK-independent fashion. Unfolded proteins bind initially to DnaJ; upon interaction with the DnaJ-bound protein, DnaK hydrolyzes its bound ATP, resulting in the formation of a stable complex. GrpE releases ADP from DnaK; ATP binding to DnaK triggers the release of the substrate protein, thus completing the reaction cycle. Several rounds of ATP-dependent interactions between DnaJ, DnaK and GrpE are required for fully efficient folding. Also involved, together with DnaK and GrpE, in the DNA replication of plasmids through activation of initiation proteins. The protein is Chaperone protein DnaJ of Campylobacter jejuni (strain RM1221).